The primary structure comprises 44 residues: Photosystem II reaction center protein K (44 aa).

Positions 1-7 (MTTLLLA) are excised as a propeptide. A helical transmembrane segment spans residues 19–39 (IVDVLPVIPLLFLLLAFVWQA).

The protein belongs to the PsbK family. As to quaternary structure, PSII is composed of 1 copy each of membrane proteins PsbA, PsbB, PsbC, PsbD, PsbE, PsbF, PsbH, PsbI, PsbJ, PsbK, PsbL, PsbM, PsbT, PsbX, PsbY, PsbZ, Psb30/Ycf12, at least 3 peripheral proteins of the oxygen-evolving complex and a large number of cofactors. It forms dimeric complexes.

Its subcellular location is the plastid. The protein localises to the chloroplast thylakoid membrane. One of the components of the core complex of photosystem II (PSII). PSII is a light-driven water:plastoquinone oxidoreductase that uses light energy to abstract electrons from H(2)O, generating O(2) and a proton gradient subsequently used for ATP formation. It consists of a core antenna complex that captures photons, and an electron transfer chain that converts photonic excitation into a charge separation. In Tupiella akineta (Green alga), this protein is Photosystem II reaction center protein K.